The sequence spans 407 residues: Peptidase T (407 aa).

His-81 is a binding site for Zn(2+). Residue Asp-83 is part of the active site. Position 142 (Asp-142) interacts with Zn(2+). The active-site Proton acceptor is the Glu-176. Glu-177, Asp-199, and His-381 together coordinate Zn(2+).

This sequence belongs to the peptidase M20B family. Zn(2+) is required as a cofactor.

It is found in the cytoplasm. It catalyses the reaction Release of the N-terminal residue from a tripeptide.. Cleaves the N-terminal amino acid of tripeptides. The sequence is that of Peptidase T from Streptococcus pneumoniae (strain ATCC 700669 / Spain 23F-1).